Consider the following 66-residue polypeptide: Large ribosomal subunit protein bL33c (66 aa).

Belongs to the bacterial ribosomal protein bL33 family.

It is found in the plastid. Its subcellular location is the chloroplast. In Fagopyrum esculentum subsp. ancestrale (Wild buckwheat), this protein is Large ribosomal subunit protein bL33c.